Reading from the N-terminus, the 127-residue chain is Fluoride-specific ion channel FluC (127 aa).

Transmembrane regions (helical) follow at residues 4–24 (TLLA…QLGV), 35–55 (LGTL…LAFF), 71–91 (TGLC…VMFL), and 103–123 (VLLN…LVTW). Na(+) contacts are provided by Gly-75 and Thr-78.

It belongs to the fluoride channel Fluc/FEX (TC 1.A.43) family.

It localises to the cell inner membrane. It catalyses the reaction fluoride(in) = fluoride(out). Na(+) is not transported, but it plays an essential structural role and its presence is essential for fluoride channel function. Fluoride-specific ion channel. Important for reducing fluoride concentration in the cell, thus reducing its toxicity. This chain is Fluoride-specific ion channel FluC, found in Pectobacterium atrosepticum (strain SCRI 1043 / ATCC BAA-672) (Erwinia carotovora subsp. atroseptica).